The primary structure comprises 932 residues: Protein translocase subunit SecA (932 aa).

ATP-binding positions include glutamine 83, 101–105 (GEGKT), and aspartate 491.

This sequence belongs to the SecA family. In terms of assembly, monomer and homodimer. Part of the essential Sec protein translocation apparatus which comprises SecA, SecYEG and auxiliary proteins SecDF. Other proteins may also be involved.

It localises to the cell inner membrane. It is found in the cellular thylakoid membrane. Its subcellular location is the cytoplasm. It carries out the reaction ATP + H2O + cellular proteinSide 1 = ADP + phosphate + cellular proteinSide 2.. Its function is as follows. Part of the Sec protein translocase complex. Interacts with the SecYEG preprotein conducting channel. Has a central role in coupling the hydrolysis of ATP to the transfer of proteins into and across the cell membrane, serving as an ATP-driven molecular motor driving the stepwise translocation of polypeptide chains across the membrane. In terms of biological role, probably participates in protein translocation into and across both the cytoplasmic and thylakoid membranes in cyanobacterial cells. The polypeptide is Protein translocase subunit SecA (Cyanothece sp. (strain PCC 7425 / ATCC 29141)).